Reading from the N-terminus, the 492-residue chain is Steroid 21-hydroxylase (492 aa).

Residues Arg-91 and Lys-120 each coordinate heme b. Arg-231 contributes to the 17alpha-hydroxyprogesterone binding site. Position 231 (Arg-231) interacts with progesterone. The heme b site is built by His-363, Arg-424, and Cys-426.

Belongs to the cytochrome P450 family. It depends on heme b as a cofactor.

It is found in the endoplasmic reticulum membrane. Its subcellular location is the microsome membrane. The enzyme catalyses 17alpha-hydroxyprogesterone + reduced [NADPH--hemoprotein reductase] + O2 = 11-deoxycortisol + oxidized [NADPH--hemoprotein reductase] + H2O + H(+). The catalysed reaction is progesterone + reduced [NADPH--hemoprotein reductase] + O2 = 21-hydroxyprogesterone + oxidized [NADPH--hemoprotein reductase] + H2O + H(+). In terms of biological role, specifically catalyzes the 21-hydroxylation of steroids. Required for the adrenal synthesis of mineralocorticoids and glucocorticoids. This chain is Steroid 21-hydroxylase (CYP21), found in Lynx lynx (Eurasian lynx).